We begin with the raw amino-acid sequence, 508 residues long: Aldehyde dehydrogenase family 7 member A1 (508 aa).

244-249 (GSSKVG) is an NAD(+) binding site. Catalysis depends on Glu-266, which acts as the Proton acceptor. Cys-300 (nucleophile) is an active-site residue.

Belongs to the aldehyde dehydrogenase family. In terms of assembly, homotetramer.

It carries out the reaction an aldehyde + NAD(+) + H2O = a carboxylate + NADH + 2 H(+). May play a role in fruit development. The protein is Aldehyde dehydrogenase family 7 member A1 of Malus domestica (Apple).